We begin with the raw amino-acid sequence, 532 residues long: Glycerophosphocholine permease GIT4 (532 aa).

6 helical membrane passes run 55–75, 98–118, 126–146, 150–170, 201–221, and 229–249; these read LWPA…NAGI, NIGS…GYIS, GMLT…VASW, VQGF…AIGA, AMID…LWIF, and VWRL…FIRL. The N-linked (GlcNAc...) asparagine glycan is linked to Asn-266. Residues 272-292 form a helical membrane-spanning segment; that stretch reads WWLIIKFYWFRLTVVSLIWFI. N-linked (GlcNAc...) asparagine glycosylation is present at Asn-314. 3 consecutive transmembrane segments (helical) span residues 321–341, 349–369, and 375–395; these read WGWS…GAFI, LTLA…SACL, and HVAG…FGPG. A glycan (N-linked (GlcNAc...) asparagine) is linked at Asn-396. The next 2 helical transmembrane spans lie at 416–436 and 450–470; these read GIAA…FPAI and VPFY…IFFV.

The protein belongs to the major facilitator superfamily. Sugar transporter (TC 2.A.1.1) family.

The protein localises to the cell membrane. It catalyses the reaction sn-glycerol 3-phosphocholine(out) = sn-glycerol 3-phosphocholine(in). Functionally, glycerophosphodiester transporter that mediates uptake of glycerophosphocholine (GroPCho) with GIT3. Does not possess detectable glycerophosphoinositol (GroPIns) transport activity. The expanded ability to utilize GroPIns and GroPCho results from the organism's pathogenic nature and its need to occupy a variety of environments within its host organism. This possibility is buttressed by the fact that GroPIns and GroPCho are present and abundant in human fluids. In Candida albicans (strain SC5314 / ATCC MYA-2876) (Yeast), this protein is Glycerophosphocholine permease GIT4.